The following is a 344-amino-acid chain: tRNA(Ile)-lysidine synthase (344 aa).

30–35 contacts ATP; the sequence is SGGQDS. The disordered stretch occupies residues 323–344; sequence PPPPAPVPPDPGERSPPPSPLY.

It belongs to the tRNA(Ile)-lysidine synthase family.

It is found in the cytoplasm. It catalyses the reaction cytidine(34) in tRNA(Ile2) + L-lysine + ATP = lysidine(34) in tRNA(Ile2) + AMP + diphosphate + H(+). Functionally, ligates lysine onto the cytidine present at position 34 of the AUA codon-specific tRNA(Ile) that contains the anticodon CAU, in an ATP-dependent manner. Cytidine is converted to lysidine, thus changing the amino acid specificity of the tRNA from methionine to isoleucine. The protein is tRNA(Ile)-lysidine synthase of Thermosynechococcus vestitus (strain NIES-2133 / IAM M-273 / BP-1).